Reading from the N-terminus, the 79-residue chain is uncharacterized protein (79 aa).

This is an uncharacterized protein from Streptomyces lividans.